The chain runs to 96 residues: Putative pterin-4-alpha-carbinolamine dehydratase (96 aa).

Belongs to the pterin-4-alpha-carbinolamine dehydratase family.

It carries out the reaction (4aS,6R)-4a-hydroxy-L-erythro-5,6,7,8-tetrahydrobiopterin = (6R)-L-erythro-6,7-dihydrobiopterin + H2O. This chain is Putative pterin-4-alpha-carbinolamine dehydratase, found in Metallosphaera sedula (strain ATCC 51363 / DSM 5348 / JCM 9185 / NBRC 15509 / TH2).